Here is a 388-residue protein sequence, read N- to C-terminus: Chorismate synthase (388 aa).

Arginine 39 and arginine 45 together coordinate NADP(+). FMN-binding positions include 130-132 (RSS), 251-252 (NA), glycine 296, 311-315 (KPIPT), and arginine 337.

It belongs to the chorismate synthase family. In terms of assembly, homotetramer. Requires FMNH2 as cofactor.

The enzyme catalyses 5-O-(1-carboxyvinyl)-3-phosphoshikimate = chorismate + phosphate. Its pathway is metabolic intermediate biosynthesis; chorismate biosynthesis; chorismate from D-erythrose 4-phosphate and phosphoenolpyruvate: step 7/7. Functionally, catalyzes the anti-1,4-elimination of the C-3 phosphate and the C-6 proR hydrogen from 5-enolpyruvylshikimate-3-phosphate (EPSP) to yield chorismate, which is the branch point compound that serves as the starting substrate for the three terminal pathways of aromatic amino acid biosynthesis. This reaction introduces a second double bond into the aromatic ring system. This is Chorismate synthase from Streptococcus pyogenes serotype M2 (strain MGAS10270).